The following is a 1380-amino-acid chain: MSSSVTPTKYVLNSFNSVPRLSYAKSIDIKDSLTDLIKIQRDSYNAFIGVGQNTESGIKNIFESMFPIEDLLGRAVLEFVSYSIGEPQYDEYECIKRGITFSVPIRIVLRFIVWKVQEVSFKEVKYVVDEETSEKSIKYIKEQEVSIGDLPTMTPHGTFIINGIERVIVSQMHRSPGVFFDSDKGKTYSSGKLIYSARIIPYRGSWLDFEFDIKDILYFRIDRKRKLPVSLLLRALGLSNNDILNTFYDKIRYVKCEKGWIVPFVVDRFRGVRLSHDLVDVNGNVLVKANTRITLRMAKKLANDGLTEYLVPFAEIQGLFIANDLFDPSGNALIISAGENITSEHINKLELFDIKEIFVLNIDFLTVGPYILNTLFLDKNVTYEDALFEIYKVLRSGESPSLDTIKAFFDGLFFEKERYDLSTVGRIKLNDHLGLNVSEDITVLTKDDIIHVIKKLVLLRDGEGSVDDIDHLGNRRVRSVGEFIENQFRIGILRLERMIMDYMSSVNFDNAMPCDFVNPKILATVLKDFFSSSQLSQFMDQTNPLSEVTHKRRLSALGPGGLTRERAGFEVRDVHPTHYGRICPIETPEGQNIGLISSLAIYARINKHGFIESPYRKVDKGVVTDKVEYLLAMQESNYYIADASATLDENNQFVDDMLYCRHDGNFVMVKREEVDYIDVSPKQIVSVAASLIPFLENNDANRALMGSNMQRQAVPLLKADAPLIGTGMESIVAAGSGTVVLAKRGGIVHRVDGLYIVIRAFDQEKNEYLGVDVYNLRKFQRSNHNTCINQRPLVKPGDYVKANDVIADGSAIDQGELALGKNVLVAFMSWQGYNFEDSIVISSEVVKKDVFTSIHIEEFECVVRDTTLGPEKIMRSVPDINEDSLSHLDDVGIVNIGAEVSAGDILVGKVTPRPPISLPPETKLLVTIFGEKVFDCVDSSLYLPLDVEGTVVDVHVFVRRGVEENDRSLLIKQNEINGFIKERDYEIDVVSEYFYDELKRVLVNSGVQCNNQNVNDYLESTPKKDWWNVNLSDETVLLQINNLREKFDSMIQNAHSKFDQKIDKLNYGYDLPQGVLCIVKVFVAVKHNLQPGDKMSGRHGNKGVISRIVPVEDMPYLEDGTPVDIILNSLGVPSRMNVGQILETHFGWASVNLGKKIGHILDNIDELTISHLRNFLDQVYDGQDLKYNIQSMSDEDLLAFAERLRGGVPMAAPVFEGPKDSQISNLLKLADLDVSGQVDLYDGRIGEKFDRKVTVGYIYMLKLHHLVDDKIHARSVGPYGLVTQQPLGGKSHFGGQRFGEMECWALQAYGAAYTLQEMLTVKSDDIVGRVKIYESIIKGDSNFECGIPESFNVMVKELRSLCLDVALKQDKDFLSSEVNN.

This sequence belongs to the RNA polymerase beta chain family. As to quaternary structure, the RNAP catalytic core consists of 2 alpha, 1 beta, 1 beta' and 1 omega subunit. When a sigma factor is associated with the core the holoenzyme is formed, which can initiate transcription.

It catalyses the reaction RNA(n) + a ribonucleoside 5'-triphosphate = RNA(n+1) + diphosphate. DNA-dependent RNA polymerase catalyzes the transcription of DNA into RNA using the four ribonucleoside triphosphates as substrates. In Ehrlichia canis (strain Jake), this protein is DNA-directed RNA polymerase subunit beta.